We begin with the raw amino-acid sequence, 1013 residues long: Zinc finger and BTB domain-containing protein 4 (1013 aa).

Residues 30–152 (CDVTLIAGDT…IYSARLALPG (123 aa)) enclose the BTB domain. A Glycyl lysine isopeptide (Lys-Gly) (interchain with G-Cter in SUMO2) cross-link involves residue lysine 40. A compositionally biased stretch (low complexity) spans 67–110 (LPPATGGAAPNPATTTAASSSSSSSSSSSSSSSSASSSSSSSSS). Disordered regions lie at residues 67 to 124 (LPPA…SPPR) and 183 to 221 (DAWV…AEAQ). Pro residues predominate over residues 111–121 (SPPPASPPASS). Positions 186–348 (VPPTPAPMAT…CRYCEKVFAL (163 aa)) are interaction with CBFA2T3. Residues 234–256 (LPCPQCGKSFIHPKRLQTHEAQC) form a C2H2-type 1; atypical zinc finger. Positions 257 to 281 (RRGASTRGSTGLGAGGAGPGGPAGV) are disordered. Positions 266–279 (TGLGAGGAGPGGPA) are enriched in gly residues. 3 consecutive C2H2-type zinc fingers follow at residues 309 to 331 (YVCA…SNVH), 337 to 359 (YPCR…EVWH), and 365 to 388 (YQCI…RAFH). Serine 391 carries the post-translational modification Phosphoserine. 4 disordered regions span residues 428-765 (KTYS…STRF), 783-852 (HGQR…DPII), 883-904 (GREP…AGEG), and 972-1013 (VNPQ…GDVG). Over residues 453-470 (ASPPPGPPPAPEPGPPPS) the composition is skewed to pro residues. Composition is skewed to low complexity over residues 496–506 (TASTGGSQAAS) and 531–554 (ATPT…ATTT). Lysine 573 is covalently cross-linked (Glycyl lysine isopeptide (Lys-Gly) (interchain with G-Cter in SUMO2)). Residues 576–590 (GGIGGGGGPPTGAGR) show a composition bias toward gly residues. The segment covering 608–625 (IGEEAIVKRRISETDLRP) has biased composition (basic and acidic residues). A Glycyl lysine isopeptide (Lys-Gly) (interchain with G-Cter in SUMO2) cross-link involves residue lysine 615. Residues 627 to 663 (ELSGEEMEESEEDEEEEDEEEEEEDEEESKAGGEDQL) are a coiled coil. A compositionally biased stretch (acidic residues) spans 629–654 (SGEEMEESEEDEEEEDEEEEEEDEEE). The segment covering 678 to 689 (AAGGASVGGSGL) has biased composition (gly residues). 2 C2H2-type zinc fingers span residues 726–748 (HRCG…QEAH) and 765–787 (FTCP…GQRH). A phosphothreonine; by HIPK2 mark is found at threonine 795 and threonine 797. Low complexity predominate over residues 836–846 (TAAEEASETAS). Positions 883 to 902 (GREPGGGRGKSGSEGPVGAG) are enriched in gly residues. Residues 976–995 (AAPPAPPTPPPPTLPPPIPP) are compositionally biased toward pro residues. The residue at position 983 (threonine 983) is a Phosphothreonine; by HIPK2. Residues 997–1013 (GEGERAGVERTQKGDVG) are compositionally biased toward basic and acidic residues.

In terms of assembly, interacts with HIPK2. Interacts with CBFA2T3. Interacts with ZBTB38. Phosphorylated by HIPK2. This phosphorylation reduces stability and triggers ZBTB4 protein degradation in response to DNA damage.

The protein resides in the nucleus. It localises to the chromosome. Functionally, transcriptional repressor with bimodal DNA-binding specificity. Represses transcription in a methyl-CpG-dependent manner. Binds with a higher affinity to methylated CpG dinucleotides in the consensus sequence 5'-CGCG-3' but can also bind to the non-methylated consensus sequence 5'-CTGCNA-3' also known as the consensus kaiso binding site (KBS). Can also bind specifically to a single methyl-CpG pair and can bind hemimethylated DNA but with a lower affinity compared to methylated DNA. Plays a role in postnatal myogenesis, may be involved in the regulation of satellite cells self-renewal. The sequence is that of Zinc finger and BTB domain-containing protein 4 (ZBTB4) from Homo sapiens (Human).